The following is a 443-amino-acid chain: Gasdermin-A2 (443 aa).

The triggers pyroptosis stretch occupies residues 1–249 (MSMFEDVTRA…QGSTVQMISG (249 aa)). 9–13 (RALAR) lines the a cardiolipin pocket. 4 beta stranded membrane passes run 78 to 95 (NFSF…DVEV), 99 to 120 (MKVK…MLSV), 164 to 179 (VTLK…FSLN), and 183 to 197 (LGLQ…AVTI). Residues 249-312 (GEMHEDFKTL…GALDKGHEVT (64 aa)) are a coiled coil.

This sequence belongs to the gasdermin family. Homooligomer; homooligomeric ring-shaped pore complex containing 18-36 subunits when inserted in the membrane. Post-translationally, cleavage relieves autoinhibition by releasing the N-terminal moiety (Gasdermin-A2, N-terminal) that initiates pyroptosis. In contrast to Gsdma, not cleaved by bacterial effector protein SpeB. In terms of processing, palmitoylated. As to expression, expressed in the gastrointestinal tract, specifically from the middle to the upper region of the gastric mucosa in the glandular stomach.

The protein localises to the cytoplasm. It localises to the perinuclear region. The protein resides in the cytosol. Its subcellular location is the cell membrane. The full-length protein before cleavage is inactive: intramolecular interactions between N- and C-terminal domains mediate autoinhibition in the absence of activation signal. The intrinsic pyroptosis-inducing activity is carried by the released N-terminal moiety (Gasdermin-A2, N-terminal). This form constitutes the precursor of the pore-forming protein and acts as a sensor of infection: upon bacterial infection, specifically cleaved by some bacterial effector protein, releasing the N-terminal moiety (Gasdermin-A2, N-terminal) that binds to membranes and forms pores, triggering pyroptosis. Functionally, pore-forming protein that causes membrane permeabilization and pyroptosis. Released upon cleavage of Gasdermin-A2, and binds to membrane inner leaflet lipids. Homooligomerizes within the membrane and forms pores of 10-15 nanometers (nm) of inner diameter, triggering pyroptosis. Binds to membrane inner leaflet lipids, such as phosphatidylinositol (4,5)-bisphosphate. The sequence is that of Gasdermin-A2 from Mus musculus (Mouse).